The primary structure comprises 320 residues: 4-hydroxy-3-methylbut-2-enyl diphosphate reductase (320 aa).

[4Fe-4S] cluster is bound at residue cysteine 13. Positions 41 and 75 each coordinate (2E)-4-hydroxy-3-methylbut-2-enyl diphosphate. Positions 41 and 75 each coordinate dimethylallyl diphosphate. 2 residues coordinate isopentenyl diphosphate: histidine 41 and histidine 75. Cysteine 97 contributes to the [4Fe-4S] cluster binding site. Histidine 125 is a binding site for (2E)-4-hydroxy-3-methylbut-2-enyl diphosphate. Histidine 125 serves as a coordination point for dimethylallyl diphosphate. Histidine 125 contributes to the isopentenyl diphosphate binding site. Glutamate 127 serves as the catalytic Proton donor. Threonine 168 is a binding site for (2E)-4-hydroxy-3-methylbut-2-enyl diphosphate. [4Fe-4S] cluster is bound at residue cysteine 225. (2E)-4-hydroxy-3-methylbut-2-enyl diphosphate is bound by residues serine 253, serine 254, asparagine 255, and serine 302. Dimethylallyl diphosphate-binding residues include serine 253, serine 254, asparagine 255, and serine 302. Residues serine 253, serine 254, asparagine 255, and serine 302 each coordinate isopentenyl diphosphate.

Belongs to the IspH family. The cofactor is [4Fe-4S] cluster.

It carries out the reaction isopentenyl diphosphate + 2 oxidized [2Fe-2S]-[ferredoxin] + H2O = (2E)-4-hydroxy-3-methylbut-2-enyl diphosphate + 2 reduced [2Fe-2S]-[ferredoxin] + 2 H(+). It catalyses the reaction dimethylallyl diphosphate + 2 oxidized [2Fe-2S]-[ferredoxin] + H2O = (2E)-4-hydroxy-3-methylbut-2-enyl diphosphate + 2 reduced [2Fe-2S]-[ferredoxin] + 2 H(+). It participates in isoprenoid biosynthesis; dimethylallyl diphosphate biosynthesis; dimethylallyl diphosphate from (2E)-4-hydroxy-3-methylbutenyl diphosphate: step 1/1. It functions in the pathway isoprenoid biosynthesis; isopentenyl diphosphate biosynthesis via DXP pathway; isopentenyl diphosphate from 1-deoxy-D-xylulose 5-phosphate: step 6/6. Functionally, catalyzes the conversion of 1-hydroxy-2-methyl-2-(E)-butenyl 4-diphosphate (HMBPP) into a mixture of isopentenyl diphosphate (IPP) and dimethylallyl diphosphate (DMAPP). Acts in the terminal step of the DOXP/MEP pathway for isoprenoid precursor biosynthesis. This chain is 4-hydroxy-3-methylbut-2-enyl diphosphate reductase, found in Chlorobium luteolum (strain DSM 273 / BCRC 81028 / 2530) (Pelodictyon luteolum).